Consider the following 216-residue polypeptide: Octanoyltransferase (216 aa).

The BPL/LPL catalytic domain maps to 33-216 (AATADELWIV…ANRLSTSLSR (184 aa)). Substrate-binding positions include 72 to 79 (RGGEVTYH), 148 to 150 (ALG), and 162 to 164 (GVS). The Acyl-thioester intermediate role is filled by Cys180.

This sequence belongs to the LipB family.

The protein localises to the cytoplasm. It carries out the reaction octanoyl-[ACP] + L-lysyl-[protein] = N(6)-octanoyl-L-lysyl-[protein] + holo-[ACP] + H(+). It participates in protein modification; protein lipoylation via endogenous pathway; protein N(6)-(lipoyl)lysine from octanoyl-[acyl-carrier-protein]: step 1/2. Its function is as follows. Catalyzes the transfer of endogenously produced octanoic acid from octanoyl-acyl-carrier-protein onto the lipoyl domains of lipoate-dependent enzymes. Lipoyl-ACP can also act as a substrate although octanoyl-ACP is likely to be the physiological substrate. In Janthinobacterium sp. (strain Marseille) (Minibacterium massiliensis), this protein is Octanoyltransferase.